Here is a 994-residue protein sequence, read N- to C-terminus: ASI1-immunoprecipitated protein 2 (994 aa).

2 disordered regions span residues 39–182 (AEFS…SGEN) and 187–206 (KADE…NDPE). A compositionally biased stretch (basic and acidic residues) spans 45-54 (KSDESSDENS). The segment covering 60–102 (SQCSFNGDNLLRSSGVNAPGSSHNTSSEASHLVNSNHDTSSEN) has biased composition (polar residues). 2 stretches are compositionally biased toward basic and acidic residues: residues 119-140 (LLDR…DHQA) and 148-163 (KVKE…EKKN). The PHD-type zinc finger occupies 212 to 263 (VKVCDTCGDAGREDLLAICSRCSDGAEHTYCMRVMLKKVPKGYWLCEECKFA). Zn(2+) contacts are provided by cysteine 215, cysteine 218, cysteine 230, cysteine 233, histidine 239, cysteine 242, cysteine 257, and cysteine 260. Disordered regions lie at residues 342–567 (AHYS…NNKG) and 839–875 (CSNP…TDRT). The span at 371 to 384 (SFLKSNSFNSLSSR) shows a compositional bias: low complexity. Polar residues-rich tracts occupy residues 417–435 (VGKS…NCND) and 449–464 (TEAN…NSSI). Basic and acidic residues-rich tracts occupy residues 469 to 478 (SPRDLKDLQS), 536 to 552 (PRSR…KDAV), and 858 to 875 (DTFR…TDRT).

In terms of assembly, component of the ASI1-AIPP1-EDM2 (AAE) RNA regulatory complex composed of at least AIPP1/EDM3, ASI1 and EDM2 and may contain CPL2, AIPP2 and AIPP3/BDT1. Part of the BAH-PHD bivalent histone reader complex that contains AIPP2, PAIPP2 and AIPP3/BDT1; the BAH-PHD module associates with CPL2 to form the BAH-PHD-CPL2 complex (BPC) for transcriptional repression. Binds directly to ASI1, AIPP3/BDT1 and CPL2 but not to PAIPP2. As to expression, expressed ubiquitously.

In terms of biological role, together with AIPP3/BDT1 and PAIPP2, cooperates to form a BAH-PHD bivalent histone reader complex able to read histone H3 lysine 27 trimethylation (H3K27me3) and low-methylated H3K4 histone marks in order to regulate transcription, especially to prevent early flowering; promotes AIPP3/BDT1 binding to H3K27me3. CPL2 is subsequently recruited to form a BAH-PHD-CPL2 complex (BPC) in order to silence several H3K27me3 and low-methylated H3K4 enriched loci, including AGO5, via the phosphorylation state-dependent inhibition of Pol II release from the transcriptional start site (e.g. Ser5P-Pol II dephosphorylation). The BPC complex represses flowering by inhibiting the expression of several genes, including AGL6, FT, FUL and SOC1. Prevents the accumulation of intronic heterochromatin-containing genes (e.g. IBM1, At3g05410 and RPP7). This Arabidopsis thaliana (Mouse-ear cress) protein is ASI1-immunoprecipitated protein 2.